A 246-amino-acid chain; its full sequence is MSVISMKQLLEAGVHFGHQTRRWNPKMKRYIFTERNGIYIIDLQKTVKKVEEAYNFTKNLAAEGGKILFVGTKKQAQDSVKEEAVRSGMYYVNQRWLGGTLTNFETIQKRIKRLKDIEKMQENGTFEVLPKKEVVQLKKELERLEKFLGGIKDMKDLPDALFIIDPRKERIAVAEARKLNIPIIGIVDTNCDPDEIDVVIPANDDAIRAVKLLTSKMADAILEAKQGEEEAEAAEETAPETETTTA.

The interval 224-246 is disordered; the sequence is AKQGEEEAEAAEETAPETETTTA. The span at 229–239 shows a compositional bias: acidic residues; it reads EEAEAAEETAP.

It belongs to the universal ribosomal protein uS2 family.

The chain is Small ribosomal subunit protein uS2 from Bacillus velezensis (strain DSM 23117 / BGSC 10A6 / LMG 26770 / FZB42) (Bacillus amyloliquefaciens subsp. plantarum).